Reading from the N-terminus, the 228-residue chain is ATP phosphoribosyltransferase (228 aa).

It belongs to the ATP phosphoribosyltransferase family. Short subfamily. As to quaternary structure, heteromultimer composed of HisG and HisZ subunits.

The protein resides in the cytoplasm. The enzyme catalyses 1-(5-phospho-beta-D-ribosyl)-ATP + diphosphate = 5-phospho-alpha-D-ribose 1-diphosphate + ATP. The protein operates within amino-acid biosynthesis; L-histidine biosynthesis; L-histidine from 5-phospho-alpha-D-ribose 1-diphosphate: step 1/9. Functionally, catalyzes the condensation of ATP and 5-phosphoribose 1-diphosphate to form N'-(5'-phosphoribosyl)-ATP (PR-ATP). Has a crucial role in the pathway because the rate of histidine biosynthesis seems to be controlled primarily by regulation of HisG enzymatic activity. The polypeptide is ATP phosphoribosyltransferase (Moorella thermoacetica (strain ATCC 39073 / JCM 9320)).